The primary structure comprises 254 residues: Putative electron transfer flavoprotein subunit YdiQ (254 aa).

This sequence belongs to the ETF beta-subunit/FixA family. YdiR and YdiQ form a heterodimer.

Functionally, may play a role in a redox process. The chain is Putative electron transfer flavoprotein subunit YdiQ (ydiQ) from Escherichia coli (strain K12).